Consider the following 371-residue polypeptide: S-adenosylmethionine:tRNA ribosyltransferase-isomerase (371 aa).

It belongs to the QueA family. In terms of assembly, monomer.

The protein localises to the cytoplasm. The catalysed reaction is 7-aminomethyl-7-carbaguanosine(34) in tRNA + S-adenosyl-L-methionine = epoxyqueuosine(34) in tRNA + adenine + L-methionine + 2 H(+). It participates in tRNA modification; tRNA-queuosine biosynthesis. Functionally, transfers and isomerizes the ribose moiety from AdoMet to the 7-aminomethyl group of 7-deazaguanine (preQ1-tRNA) to give epoxyqueuosine (oQ-tRNA). The protein is S-adenosylmethionine:tRNA ribosyltransferase-isomerase of Nitratidesulfovibrio vulgaris (strain DP4) (Desulfovibrio vulgaris).